Consider the following 318-residue polypeptide: Thioredoxin reductase (318 aa).

36–43 lines the FAD pocket; sequence TGLQQGGQ. A disulfide bridge links C136 with C139. FAD is bound at residue 286 to 295; that stretch reads DVMDHNYRQA.

It belongs to the class-II pyridine nucleotide-disulfide oxidoreductase family. Homodimer. Requires FAD as cofactor.

It localises to the cytoplasm. The enzyme catalyses [thioredoxin]-dithiol + NADP(+) = [thioredoxin]-disulfide + NADPH + H(+). The polypeptide is Thioredoxin reductase (trxB) (Haemophilus influenzae (strain ATCC 51907 / DSM 11121 / KW20 / Rd)).